Consider the following 159-residue polypeptide: Cytochrome c-type biogenesis protein CcmE (159 aa).

The Cytoplasmic segment spans residues 1 to 23; sequence MSSQSFHNSPSLRVILKQRKKKR. A helical; Signal-anchor for type II membrane protein transmembrane segment spans residues 24–44; it reads LLIVLFCCLIIAIATSLITYA. At 45-159 the chain is on the periplasmic side; it reads LRNTVSFFRM…RLNKHHRVEK (115 aa). The heme site is built by histidine 138 and tyrosine 142.

The protein belongs to the CcmE/CycJ family.

The protein resides in the cell inner membrane. Its function is as follows. Heme chaperone required for the biogenesis of c-type cytochromes. Transiently binds heme delivered by CcmC and transfers the heme to apo-cytochromes in a process facilitated by CcmF and CcmH. The sequence is that of Cytochrome c-type biogenesis protein CcmE from Bartonella henselae (strain ATCC 49882 / DSM 28221 / CCUG 30454 / Houston 1) (Rochalimaea henselae).